The primary structure comprises 1175 residues: Pyruvate carboxylase (1175 aa).

A Biotin carboxylation domain is found at 22–474 (NANKILVANR…WTTFIDDTPS (453 aa)). ATP is bound by residues Lys-140, Glu-224, and His-259. In terms of domain architecture, ATP-grasp spans 144–341 (RNLAGKCNVP…IVAAQIQIAA (198 aa)). Arg-316 is a catalytic residue. The Pyruvate carboxyltransferase domain occupies 561 to 828 (CLIMDTTWRD…NTGITEQNAR (268 aa)). Substrate is bound by residues 569-573 (RDAHQ) and Arg-642. Asp-570 is a binding site for a divalent metal cation. Residues Lys-738, His-768, and His-770 each contribute to the a divalent metal cation site. N6-carboxylysine is present on Lys-738. Thr-902 provides a ligand contact to substrate. The Biotinyl-binding domain occupies 1099–1174 (KADAHNPNEV…DAGDLICKIT (76 aa)). At Lys-1140 the chain carries N6-biotinyllysine.

Requires biotin as cofactor. The cofactor is Zn(2+).

It localises to the cytoplasm. The enzyme catalyses hydrogencarbonate + pyruvate + ATP = oxaloacetate + ADP + phosphate + H(+). The protein operates within carbohydrate biosynthesis; gluconeogenesis. In terms of biological role, pyruvate carboxylase catalyzes a 2-step reaction, involving the ATP-dependent carboxylation of the covalently attached biotin in the first step and the transfer of the carboxyl group to pyruvate in the second. The sequence is that of Pyruvate carboxylase (PYC) from Pichia angusta (Yeast).